We begin with the raw amino-acid sequence, 91 residues long: Small ribosomal subunit protein bS20 (91 aa).

Basic and acidic residues predominate over residues 1–18 (MPLHKSAEKRLRQSERRN). The disordered stretch occupies residues 1 to 26 (MPLHKSAEKRLRQSERRNARNRSRKK).

The protein belongs to the bacterial ribosomal protein bS20 family.

Its function is as follows. Binds directly to 16S ribosomal RNA. The sequence is that of Small ribosomal subunit protein bS20 from Pelodictyon phaeoclathratiforme (strain DSM 5477 / BU-1).